Here is a 225-residue protein sequence, read N- to C-terminus: Peptidyl-tRNA hydrolase (225 aa).

Tyr14 is a binding site for tRNA. His19 functions as the Proton acceptor in the catalytic mechanism. The tRNA site is built by Phe64, Asn66, and Asn112. Residues 187 to 225 (MQPPKPEKPKGEAKPAAPEAPEAAPDTRSALQRLADRFR) form a disordered region. Residues 200–210 (KPAAPEAPEAA) are compositionally biased toward low complexity.

The protein belongs to the PTH family. In terms of assembly, monomer.

It is found in the cytoplasm. It catalyses the reaction an N-acyl-L-alpha-aminoacyl-tRNA + H2O = an N-acyl-L-amino acid + a tRNA + H(+). Its function is as follows. Hydrolyzes ribosome-free peptidyl-tRNAs (with 1 or more amino acids incorporated), which drop off the ribosome during protein synthesis, or as a result of ribosome stalling. Catalyzes the release of premature peptidyl moieties from peptidyl-tRNA molecules trapped in stalled 50S ribosomal subunits, and thus maintains levels of free tRNAs and 50S ribosomes. In Cereibacter sphaeroides (strain ATCC 17025 / ATH 2.4.3) (Rhodobacter sphaeroides), this protein is Peptidyl-tRNA hydrolase.